A 649-amino-acid polypeptide reads, in one-letter code: tRNA-guanine(15) transglycosylase (649 aa).

Asp88 (nucleophile) is an active-site residue. 2 residues coordinate substrate: Asp123 and Ala194. Residues Cys280, Cys282, and Cys285 each coordinate Zn(2+). The PUA domain occupies 573 to 648 (KYRIVIDSSV…VAVTLRGGLK (76 aa)).

This sequence belongs to the archaeosine tRNA-ribosyltransferase family. Zn(2+) is required as a cofactor.

It catalyses the reaction guanosine(15) in tRNA + 7-cyano-7-deazaguanine = 7-cyano-7-carbaguanosine(15) in tRNA + guanine. It participates in tRNA modification; archaeosine-tRNA biosynthesis. Its function is as follows. Exchanges the guanine residue with 7-cyano-7-deazaguanine (preQ0) at position 15 in the dihydrouridine loop (D-loop) of archaeal tRNAs. This Methanococcus maripaludis (strain C7 / ATCC BAA-1331) protein is tRNA-guanine(15) transglycosylase.